The sequence spans 216 residues: 3-keto-L-gulonate-6-phosphate decarboxylase UlaD (216 aa).

D11 lines the substrate pocket. 2 residues coordinate Mg(2+): E33 and D62. R192 contacts substrate.

This sequence belongs to the HPS/KGPDC family. KGPDC subfamily. Homodimer. It depends on Mg(2+) as a cofactor.

It catalyses the reaction 3-dehydro-L-gulonate 6-phosphate + H(+) = L-xylulose 5-phosphate + CO2. Its pathway is cofactor degradation; L-ascorbate degradation; D-xylulose 5-phosphate from L-ascorbate: step 2/4. Catalyzes the decarboxylation of 3-keto-L-gulonate-6-P into L-xylulose-5-P. Is involved in the anaerobic L-ascorbate utilization. The sequence is that of 3-keto-L-gulonate-6-phosphate decarboxylase UlaD from Shigella dysenteriae serotype 1 (strain Sd197).